A 443-amino-acid chain; its full sequence is MVKLSCVIVGVPGDPFQVEIDEICELVAGLKDAIKKEKPDSIKCDADKLQLFKAAKEDRTFSASGAEEEKKDFRWLKAASDDVKKLKHGEKTAAIEAVVRKDQVLRGKETVSDVLMGMESPSISQIHVLVVLPEDSESEGGTSAQPAEKERLLKFLREQAADKKRKRYWHSEMDMDQGWELLDDFDLTVKPVSTVHAEADPADSFNWQSDLVQDGQEVVLTEEQQRGRYREYVERNIGAVLKENKLCVTAVDEGENVLSVDVPKLGIELRGRTDLLVLSDIVEETSDYLMHLPEVKMLIEVKRDAEASDFQALSELIALDILAEDPVMALLTDLNQSWKFFWVSKKSDDSDCICKATIKSPGEAFQVIRALLTASAETKLPCFHQPLKRLKLSQHRGYKNAECLQQYYKVAEVSGPDYELARAVAEHLVRSMPGYCCANESEP.

An N-terminal signal peptide occupies residues 1-17 (MVKLSCVIVGVPGDPFQ). The tract at residues 18–56 (VEIDEICELVAGLKDAIKKEKPDSIKCDADKLQLFKAAK) is LQLFLAK domain. A DWL domain region spans residues 57-126 (EDRTFSASGA…GMESPSISQI (70 aa)). The HVLVXXP motif motif lies at 127–133 (HVLVVLP). The segment at 134-439 (EDSESEGGTS…RSMPGYCCAN (306 aa)) is effector domain. 2 short sequence motifs (nuclear localization signal) span residues 161-170 (ADKKRKRYWH) and 384-393 (HQPLKRLKLS).

Belongs to the Crinkler effector family.

The protein resides in the secreted. Its subcellular location is the host nucleus. Its function is as follows. Secreted effector that exhibits strong cell death suppression activity and suppresses cell death induced by a variety of effectors including CRN63, Avh241 and Avr3a. Protects host plants from biotic and abiotic stresses such as salinity and drought by up-regulation of many defense-related genes, including ABC transporters, Cytochrome P450 monooxygenases and receptor-like kinases (RLKs). Also enhances resistance to Phytophtora pathogens. The sequence is that of Crinkler effector protein 161 from Phytophthora sojae (strain P6497) (Soybean stem and root rot agent).